Reading from the N-terminus, the 65-residue chain is Large ribosomal subunit protein uL29 (65 aa).

The protein belongs to the universal ribosomal protein uL29 family.

This Lactobacillus delbrueckii subsp. bulgaricus (strain ATCC 11842 / DSM 20081 / BCRC 10696 / JCM 1002 / NBRC 13953 / NCIMB 11778 / NCTC 12712 / WDCM 00102 / Lb 14) protein is Large ribosomal subunit protein uL29.